Reading from the N-terminus, the 428-residue chain is Light-independent protochlorophyllide reductase subunit N (428 aa).

Residues Cys29, Cys54, and Cys115 each coordinate [4Fe-4S] cluster.

This sequence belongs to the BchN/ChlN family. As to quaternary structure, protochlorophyllide reductase is composed of three subunits; BchL, BchN and BchB. Forms a heterotetramer of two BchB and two BchN subunits. [4Fe-4S] cluster serves as cofactor.

The enzyme catalyses chlorophyllide a + oxidized 2[4Fe-4S]-[ferredoxin] + 2 ADP + 2 phosphate = protochlorophyllide a + reduced 2[4Fe-4S]-[ferredoxin] + 2 ATP + 2 H2O. Its pathway is porphyrin-containing compound metabolism; bacteriochlorophyll biosynthesis (light-independent). In terms of biological role, component of the dark-operative protochlorophyllide reductase (DPOR) that uses Mg-ATP and reduced ferredoxin to reduce ring D of protochlorophyllide (Pchlide) to form chlorophyllide a (Chlide). This reaction is light-independent. The NB-protein (BchN-BchB) is the catalytic component of the complex. The polypeptide is Light-independent protochlorophyllide reductase subunit N (Roseobacter denitrificans (strain ATCC 33942 / OCh 114) (Erythrobacter sp. (strain OCh 114))).